A 640-amino-acid polypeptide reads, in one-letter code: Antigenic protein NP1 (640 aa).

One can recognise a Peptidase M60 domain in the interval 1–288 (VQVSIGKCNH…SYVNIAHAFG (288 aa)). The PA14 domain occupies 463 to 615 (LDPHQVEYEV…TDQSSVNVSK (153 aa)).

This Entamoeba histolytica protein is Antigenic protein NP1.